Consider the following 328-residue polypeptide: Alanine racemase (328 aa).

Residue K33 is the Proton acceptor; specific for D-alanine of the active site. Residue K33 is modified to N6-(pyridoxal phosphate)lysine. Position 118 (R118) interacts with substrate. Y237 serves as the catalytic Proton acceptor; specific for L-alanine. Position 283 (M283) interacts with substrate.

Belongs to the alanine racemase family. The cofactor is pyridoxal 5'-phosphate.

It catalyses the reaction L-alanine = D-alanine. It functions in the pathway amino-acid biosynthesis; D-alanine biosynthesis; D-alanine from L-alanine: step 1/1. Functionally, catalyzes the interconversion of L-alanine and D-alanine. May also act on other amino acids. In Campylobacter jejuni (strain RM1221), this protein is Alanine racemase (alr).